The primary structure comprises 676 residues: Putative Xaa-Pro dipeptidyl-peptidase (676 aa).

Active-site charge relay system residues include Ser-224, Asp-330, and His-361. The tract at residues 423 to 450 is disordered; it reads RPGTGTQAGVGTLGLRTGSGTETFTDDP.

The protein belongs to the peptidase S15 family.

It carries out the reaction Hydrolyzes Xaa-Pro-|- bonds to release unblocked, N-terminal dipeptides from substrates including Ala-Pro-|-p-nitroanilide and (sequentially) Tyr-Pro-|-Phe-Pro-|-Gly-Pro-|-Ile.. This Streptomyces avermitilis (strain ATCC 31267 / DSM 46492 / JCM 5070 / NBRC 14893 / NCIMB 12804 / NRRL 8165 / MA-4680) protein is Putative Xaa-Pro dipeptidyl-peptidase.